The sequence spans 347 residues: GMP reductase (347 aa).

108 to 131 is an NADP(+) binding site; sequence ADFEKTVQILALNPALNFVCIDVA. 2 residues coordinate K(+): Gly181 and Gly183. The Thioimidate intermediate role is filled by Cys186. 216–239 is an NADP(+) binding site; the sequence is IVSDGGCTMPGDVAKAFGGGADFV.

It belongs to the IMPDH/GMPR family. GuaC type 1 subfamily. Homotetramer.

The enzyme catalyses IMP + NH4(+) + NADP(+) = GMP + NADPH + 2 H(+). Catalyzes the irreversible NADPH-dependent deamination of GMP to IMP. It functions in the conversion of nucleobase, nucleoside and nucleotide derivatives of G to A nucleotides, and in maintaining the intracellular balance of A and G nucleotides. The polypeptide is GMP reductase (Salmonella typhi).